The sequence spans 1365 residues: MEFSIKQSPLSVQSVVKCIKMKQAPEILGSANGKTPSCEVNRECSVFLSKAQLSSSLQEGVMQKFNGHDALPFIPADKLKDLTSRVFNGEPGAHDAKLRFESQEMKGIGTPPNTTPIKNGSPEIKLKITKTYMNGKPLFESSICGDSAADVSQSEENGQKPENKARRNRKRSIKYDSLLEQGLVEAALVSKISSPSDKKIPAKKESCPNTGRDKDHLLKYNVGDLVWSKVSGYPWWPCMVSADPLLHSYTKLKGQKKSARQYHVQFFGDAPERAWIFEKSLVAFEGEGQFEKLCQESAKQAPTKAEKIKLLKPISGKLRAQWEMGIVQAEEAASMSVEERKAKFTFLYVGDQLHLNPQVAKEAGIAAESLGEMAESSGVSEEAAENPKSVREECIPMKRRRRAKLCSSAETLESHPDIGKSTPQKTAEADPRRGVGSPPGRKKTTVSMPRSRKGDAASQFLVFCQKHRDEVVAEHPDASGEEIEELLRSQWSLLSEKQRARYNTKFALVAPVQAEEDSGNVNGKKRNHTKRIQDPTEDAEAEDTPRKRLRTDKHSLRKRDTITDKTARTSSYKAMEAASSLKSQAATKNLSDACKPLKKRNRASTAASSALGFSKSSSPSASLTENEVSDSPGDEPSESPYESADETQTEVSVSSKKSERGVTAKKEYVCQLCEKPGSLLLCEGPCCGAFHLACLGLSRRPEGRFTCSECASGIHSCFVCKESKTDVKRCVVTQCGKFYHEACVKKYPLTVFESRGFRCPLHSCVSCHASNPSNPRPSKGKMMRCVRCPVAYHSGDACLAAGCSVIASNSIICTAHFTARKGKRHHAHVNVSWCFVCSKGGSLLCCESCPAAFHPDCLNIEMPDGSWFCNDCRAGKKLHFQDIIWVKLGNYRWWPAEVCHPKNVPPNIQKMKHEIGEFPVFFFGSKDYYWTHQARVFPYMEGDRGSRYQGVRGIGRVFKNALQEAEARFREIKLQREARETQESERKPPPYKHIKVNKPYGKVQIYTADISEIPKCNCKPTDENPCGFDSECLNRMLMFECHPQVCPAGEFCQNQCFTKRQYPETKIIKTDGKGWGLVAKRDIRKGEFVNEYVGELIDEEECMARIKHAHENDITHFYMLTIDKDRIIDAGPKGNYSRFMNHSCQPNCETLKWTVNGDTRVGLFAVCDIPAGTELTFNYNLDCLGNEKTVCRCGASNCSGFLGDRPKTSTTLSSEEKGKKTKKKTRRRRAKGEGKRQSEDECFRCGDGGQLVLCDRKFCTKAYHLSCLGLGKRPFGKWECPWHHCDVCGKPSTSFCHLCPNSFCKEHQDGTAFSCTPDGRSYCCEHDLGAASVRSTKTEKPPPEPGKPKGKRRRRRGWRRVTEGK.

Phosphothreonine occurs at positions 110 and 114. The residue at position 121 (serine 121) is a Phosphoserine. The tract at residues 149–170 (ADVSQSEENGQKPENKARRNRK) is disordered. Position 172 is a phosphoserine (serine 172). A PWWP 1 domain is found at 222–286 (VGDLVWSKVS…FEKSLVAFEG (65 aa)). Position 376 is a phosphoserine (serine 376). Disordered regions lie at residues 376-455 (SSGV…RKGD) and 516-658 (EDSG…SKKS). Threonine 422 is subject to Phosphothreonine. Positions 453-521 (KGDAASQFLV…VQAEEDSGNV (69 aa)) form a DNA-binding region, HMG box. Residue threonine 544 is modified to Phosphothreonine. Over residues 552 to 567 (DKHSLRKRDTITDKTA) the composition is skewed to basic and acidic residues. Residues 580-590 (SLKSQAATKNL) are compositionally biased toward polar residues. A compositionally biased stretch (low complexity) spans 606–622 (AASSALGFSKSSSPSAS). The residue at position 614 (serine 614) is a Phosphoserine. Over residues 632-648 (PGDEPSESPYESADETQ) the composition is skewed to acidic residues. 3 PHD-type zinc fingers span residues 667–713 (EYVC…CASG), 714–770 (IHSC…CHAS), and 831–875 (VSWC…CRAG). Residues 880-942 (FQDIIWVKLG…QARVFPYMEG (63 aa)) enclose the PWWP 2 domain. One can recognise an AWS domain in the interval 1011–1061 (SEIPKCNCKPTDENPCGFDSECLNRMLMFECHPQVCPAGEFCQNQCFTKRQ). Cysteine 1016, cysteine 1018, cysteine 1026, cysteine 1032, cysteine 1041, cysteine 1046, and cysteine 1052 together coordinate Zn(2+). The 118-residue stretch at 1063–1180 (PETKIIKTDG…AGTELTFNYN (118 aa)) folds into the SET domain. S-adenosyl-L-methionine-binding positions include tryptophan 1075, 1115 to 1118 (THFY), and 1141 to 1142 (NH). A Zn(2+)-binding site is contributed by cysteine 1144. Residue asparagine 1186 participates in S-adenosyl-L-methionine binding. A Post-SET domain is found at 1187–1203 (EKTVCRCGASNCSGFLG). Cysteine 1191 is a Zn(2+) binding site. Arginine 1192 is a binding site for S-adenosyl-L-methionine. The Zn(2+) site is built by cysteine 1193 and cysteine 1198. A disordered region spans residues 1207-1232 (KTSTTLSSEEKGKKTKKKTRRRRAKG). Residues 1219–1230 (KKTKKKTRRRRA) are compositionally biased toward basic residues. A PHD-type 4; atypical zinc finger spans residues 1239 to 1286 (EDECFRCGDGGQLVLCDRKFCTKAYHLSCLGLGKRPFGKWECPWHHCD). Residues 1333–1365 (VRSTKTEKPPPEPGKPKGKRRRRRGWRRVTEGK) form a disordered region. A compositionally biased stretch (basic residues) spans 1348-1359 (PKGKRRRRRGWR).

Belongs to the class V-like SAM-binding methyltransferase superfamily. Histone-lysine methyltransferase family. SET2 subfamily. Interacts with HDAC1. Interacts (via PHD-type zinc fingers 1, 2 and 3) with SALL1. Interacts (via PHD-type 1, 2 and 3) with SALL4. Interacts with NANOG. Interacts with OGT. Interacts (via HMG box) with NKX2-5. In terms of tissue distribution, widely expressed. Predominantly expressed in thymus and testis.

It is found in the nucleus. It localises to the chromosome. The protein resides in the cytoplasm. The protein localises to the nucleolus. The catalysed reaction is L-lysyl(36)-[histone H3] + S-adenosyl-L-methionine = N(6)-methyl-L-lysyl(36)-[histone H3] + S-adenosyl-L-homocysteine + H(+). The enzyme catalyses L-lysyl(36)-[histone H3] + 2 S-adenosyl-L-methionine = N(6),N(6)-dimethyl-L-lysyl(36)-[histone H3] + 2 S-adenosyl-L-homocysteine + 2 H(+). In terms of biological role, histone methyltransferase which specifically dimethylates nucleosomal histone H3 at 'Lys-36' (H3K36me2). Also monomethylates nucleosomal histone H3 at 'Lys-36' (H3K36me) in vitro. Does not trimethylate nucleosomal histone H3 at 'Lys-36' (H3K36me3). However, specifically trimethylates histone H3 at 'Lys-36' (H3K36me3) at euchromatic regions in embryonic stem (ES) cells. By methylating histone H3 at 'Lys-36', involved in the regulation of gene transcription during various biological processes. In ES cells, associates with developmental transcription factors such as SALL1 and represses inappropriate gene transcription mediated by histone deacetylation. During heart development, associates with transcription factor NKX2-5 to repress transcription of NKX2-5 target genes. Plays an essential role in adipogenesis, by regulating expression of genes involved in pre-adipocyte differentiation. During T-cell receptor (TCR) and CD28-mediated T-cell activation, promotes the transcription of transcription factor BCL6 which is required for follicular helper T (Tfh) cell differentiation. During B-cell development, required for the generation of the B1 lineage. During B2 cell activation, may contribute to the control of isotype class switch recombination (CRS), splenic germinal center formation, and the humoral immune response. Plays a role in class switch recombination of the immunoglobulin heavy chain (IgH) locus during B-cell activation. By regulating the methylation of histone H3 at 'Lys-36' and histone H4 at 'Lys-20' at the IgH locus, involved in TP53BP1 recruitment to the IgH switch region and promotes the transcription of IgA. Its function is as follows. Histone methyltransferase which specifically dimethylates nucleosomal histone H3 at 'Lys-36' (H3K36me2). Histone methyltransferase which specifically dimethylates nucleosomal histone H3 at 'Lys-36' (H3K36me2). Methylation of histone H3 at 'Lys-27' is controversial. Mono-, di- or tri-methylates histone H3 at 'Lys-27' (H3K27me, H3K27me2 and H3K27me3). Does not methylate histone H3 at 'Lys-27'. May act as a transcription regulator that binds DNA and suppresses IL5 transcription through HDAC recruitment. The chain is Histone-lysine N-methyltransferase NSD2 from Homo sapiens (Human).